Here is a 396-residue protein sequence, read N- to C-terminus: Proteasome-activating nucleotidase (396 aa).

Positions 16–57 (ITYLKRRIRQLELQVRMLEADKERLERELSRLRSEMSRLRQP) form a coiled coil. ATP contacts are provided by residues 181 to 186 (GCGKTL) and histidine 320. The interval 394–396 (IYG) is docks into pockets in the proteasome alpha-ring to cause gate opening.

Belongs to the AAA ATPase family. In terms of assembly, homohexamer. The hexameric complex has a two-ring architecture resembling a top hat that caps the 20S proteasome core at one or both ends. Upon ATP-binding, the C-terminus of PAN interacts with the alpha-rings of the proteasome core by binding to the intersubunit pockets.

The protein localises to the cytoplasm. In terms of biological role, ATPase which is responsible for recognizing, binding, unfolding and translocation of substrate proteins into the archaeal 20S proteasome core particle. Is essential for opening the gate of the 20S proteasome via an interaction with its C-terminus, thereby allowing substrate entry and access to the site of proteolysis. Thus, the C-termini of the proteasomal ATPase function like a 'key in a lock' to induce gate opening and therefore regulate proteolysis. Unfolding activity requires energy from ATP hydrolysis, whereas ATP binding alone promotes ATPase-20S proteasome association which triggers gate opening, and supports translocation of unfolded substrates. The sequence is that of Proteasome-activating nucleotidase from Pyrococcus abyssi (strain GE5 / Orsay).